A 356-amino-acid chain; its full sequence is Surface presentation of antigens protein SpaS (356 aa).

5 helical membrane passes run 29–49 (LIIACLTLGGIAYLVSYGSFN), 72–92 (LAVFGIGLKYLIPFMLLCLVC), 132–152 (VKDTVKTLLYLSSFVVAAIIC), 179–199 (LLALVLTCLACALIVLLLDAI), and 261–281 (HITIGIYFKPELMPIPMISVY).

It belongs to the type III secretion exporter family.

It localises to the cell inner membrane. Involved in a secretory pathway responsible for the surface presentation of determinants needed for the entry of Salmonella species into mammalian cells. This Salmonella typhimurium (strain LT2 / SGSC1412 / ATCC 700720) protein is Surface presentation of antigens protein SpaS (spaS).